We begin with the raw amino-acid sequence, 146 residues long: MDSYKTQWLTSEGDERVRCELLAFGTVEDLERGTLNAQDRNVLVKLSILNYVYGKQVVTFDALLKNYAQAGIELTDNDIEMILLELCNHGIMDVSIDSVAREVKVLQLSRYRDVYCGERELLVVNPTKVITNIEIIDTLQAYSDKL.

A PCI domain is found at 1–107 (MDSYKTQWLT…SVAREVKVLQ (107 aa)).

As to quaternary structure, component of a COP9 signalosome-like (CSN) complex.

The protein localises to the cytoplasm. It localises to the nucleus. In terms of biological role, component of the COP9 signalosome (CSN) complex that acts as a regulator of the ubiquitin (Ubl) conjugation pathway by mediating the deneddylation of the cullin subunit of SCF-type E3 ubiquitin-protein ligase complexes. The CSN complex is involved in the regulation of the mating pheromone response. The sequence is that of COP9 signalosome complex subunit 9 (CSN9) from Candida glabrata (strain ATCC 2001 / BCRC 20586 / JCM 3761 / NBRC 0622 / NRRL Y-65 / CBS 138) (Yeast).